The primary structure comprises 361 residues: Velvet complex subunit B (361 aa).

One can recognise a Velvet domain in the interval 1–336 (MIVRTEDQKL…GNQGQKLPLR (336 aa)). Disordered stretches follow at residues 42-222 (PSST…NNIP) and 327-361 (GNQG…EDDS). Low complexity-rich tracts occupy residues 57-74 (PSAS…SRPP) and 93-107 (PPSS…SQSQ). Positions 108-127 (DNLTPSSPYPPHSNSEQPQT) are enriched in polar residues. The segment covering 130–147 (YPPPPPIDRAAPFPPPVL) has biased composition (pro residues). Composition is skewed to polar residues over residues 149–168 (SIQS…NNDD), 181–196 (GYTN…YGSG), and 212–222 (SGNATPQNNIP). A compositionally biased stretch (basic residues) spans 335–349 (LRNRHGTGSKRRRRN).

This sequence belongs to the velvet family. VelB subfamily. As to quaternary structure, component of the heterotrimeric velvet complex composed of laeA, veA and velB; VeA acting as a bridging protein between laeA and velB. Forms a heterodimeric complex with vosA; the formation of the velB-vosA complex is light-dependent.

The protein resides in the nucleus. It is found in the cytoplasm. Its function is as follows. Component of the velvet transcription factor complex that controls sexual/asexual developmental ratio in response to light, promoting sexual development in the darkness while stimulating asexual sporulation under illumination. The velvet complex acts as a global regulator for secondary metabolite gene expression. Component of the velB-VosA heterodimeric complex that plays a dual role in activating genes associated with spore maturation and repressing certain development-associated genes. The velB-VosA complex binds DNA through the DNA-binding domain of vosA that recognizes an 11-nucleotide consensus sequence 5'-CTGGCCGCGGC-3' consisting of two motifs in the promoters of key developmental regulatory genes. The chain is Velvet complex subunit B from Coprinopsis cinerea (strain Okayama-7 / 130 / ATCC MYA-4618 / FGSC 9003) (Inky cap fungus).